Here is a 234-residue protein sequence, read N- to C-terminus: Ras-related protein Rab-20 (234 aa).

Residues glycine 17, lysine 18, threonine 19, aspartate 32, and threonine 36 each coordinate GTP. Mg(2+) is bound at residue threonine 19. Short sequence motifs (switch) lie at residues 28 to 41 (RRFP…GGAF) and 55 to 72 (DTAG…YCRG). Residues threonine 36 and aspartate 55 each coordinate Mg(2+). 4 residues coordinate GTP: glycine 58, asparagine 113, lysine 114, and aspartate 116. Residues 125 to 144 (GQEKEECSPNMDAGDRVSPR) are disordered. Residues 126–142 (QEKEECSPNMDAGDRVS) are compositionally biased toward basic and acidic residues. GTP contacts are provided by alanine 184 and lysine 185. The segment at 212-234 (RPSHTVDISSHKPPKRTRSGCCA) is disordered. Basic residues predominate over residues 223 to 234 (KPPKRTRSGCCA). 2 S-geranylgeranyl cysteine lipidation sites follow: cysteine 232 and cysteine 233.

It belongs to the small GTPase superfamily. Rab family. The cofactor is Mg(2+). Low or absent expression in normal pancreas and stronger expression in 15 of 18 exocrine pancreatic adenocarcinomas (at protein level).

Its subcellular location is the golgi apparatus. It localises to the cytoplasmic vesicle. The protein localises to the phagosome. The protein resides in the phagosome membrane. The enzyme catalyses GTP + H2O = GDP + phosphate + H(+). With respect to regulation, regulated by guanine nucleotide exchange factors (GEFs) which promote the exchange of bound GDP for free GTP. Regulated by GTPase activating proteins (GAPs) which increase the GTP hydrolysis activity. Inhibited by GDP dissociation inhibitors (GDIs). Functionally, the small GTPases Rab are key regulators of intracellular membrane trafficking, from the formation of transport vesicles to their fusion with membranes. Rabs cycle between an inactive GDP-bound form and an active GTP-bound form that is able to recruit to membranes different sets of downstream effectors directly responsible for vesicle formation, movement, tethering and fusion. RAB20 plays a role in apical endocytosis/recycling. Plays a role in the maturation and acidification of phagosomes that engulf pathogens, such as S.aureus and M.tuberculosis. Plays a role in the fusion of phagosomes with lysosomes. This chain is Ras-related protein Rab-20, found in Homo sapiens (Human).